The primary structure comprises 143 residues: Large ribosomal subunit protein uL11 (143 aa).

This sequence belongs to the universal ribosomal protein uL11 family. In terms of assembly, part of the ribosomal stalk of the 50S ribosomal subunit. Interacts with L10 and the large rRNA to form the base of the stalk. L10 forms an elongated spine to which L12 dimers bind in a sequential fashion forming a multimeric L10(L12)X complex. In terms of processing, one or more lysine residues are methylated.

Functionally, forms part of the ribosomal stalk which helps the ribosome interact with GTP-bound translation factors. The sequence is that of Large ribosomal subunit protein uL11 from Marinobacter nauticus (strain ATCC 700491 / DSM 11845 / VT8) (Marinobacter aquaeolei).